The sequence spans 1002 residues: TOG array regulator of axonemal microtubules protein 2 (1002 aa).

Disordered regions lie at residues S54 to S74, K131 to E214, E332 to V351, P402 to N421, and L426 to R450.

Belongs to the Crescerin family.

This chain is TOG array regulator of axonemal microtubules protein 2 (Togaram2), found in Mus musculus (Mouse).